A 511-amino-acid chain; its full sequence is Cobyric acid synthase (511 aa).

Positions 251–443 (LLDIAIICLP…IHGIFDNDVF (193 aa)) constitute a GATase cobBQ-type domain. Cys332 (nucleophile) is an active-site residue. His435 is an active-site residue.

It belongs to the CobB/CobQ family. CobQ subfamily.

It participates in cofactor biosynthesis; adenosylcobalamin biosynthesis. Its function is as follows. Catalyzes amidations at positions B, D, E, and G on adenosylcobyrinic A,C-diamide. NH(2) groups are provided by glutamine, and one molecule of ATP is hydrogenolyzed for each amidation. The protein is Cobyric acid synthase of Listeria monocytogenes serovar 1/2a (strain ATCC BAA-679 / EGD-e).